We begin with the raw amino-acid sequence, 557 residues long: MAAQGFLLIATFLLVLMVLARPLGSGLARLINDIPLPGTTGVERVLFSALGVSDREMNWKQYLSAILGLNILGLAVLFFMLLGQHYLPLNPQQLPGLSWDLALNTAVSFVTNTNWQSYSGETTLSYFSQMAGLTVQNFLSAASGIAVIFALIRAFTRQSMNTLGNAWVDLLRITLWVLTPVALLIALFFIQQGALQNFLPYQAVTTIEGAQQLLPMGPVASQEAIKMLGTNGGGFFNANSSHPFENPTVLTNFVQMLAIFLIPTALCFAFGEVAGDRRQGRMLLWAMSVIFVICVGVVMWAEVQGNPHLLALGADSSINMEGKESRFGVLVSSLFAVVTTAASCGAVIAMHDSFTALGGMVPMWLMQIGEVVFGGVGSGLYGMMLFVLLAVFIAGLMIGRTPEYLGKKIDVREMKLTALAILVTPTLVLMGAALAMMTDAGRSAMLNPGPHGFSEVLYAVSSAANNNGSAFAGLSANSPFWNCLLALCMFVGRFGVIIPVMAIAGSLVSKKSQPASSGTLPTHGPLFVGLLIGTVLLVGALTFIPALALGPVAEYLS.

A run of 12 helical transmembrane segments spans residues Gly-5–Ser-25, Leu-63–Gly-83, Gly-132–Ile-152, Leu-170–Ile-190, Phe-253–Val-273, Leu-283–Val-303, Val-329–Ala-349, Ala-356–Val-376, Gly-379–Gly-399, Leu-416–Met-436, Leu-484–Ala-504, and Leu-526–Ala-546.

This sequence belongs to the KdpA family. As to quaternary structure, the system is composed of three essential subunits: KdpA, KdpB and KdpC.

It localises to the cell inner membrane. Functionally, part of the high-affinity ATP-driven potassium transport (or Kdp) system, which catalyzes the hydrolysis of ATP coupled with the electrogenic transport of potassium into the cytoplasm. This subunit binds the periplasmic potassium ions and delivers the ions to the membrane domain of KdpB through an intramembrane tunnel. This Escherichia coli O6:K15:H31 (strain 536 / UPEC) protein is Potassium-transporting ATPase potassium-binding subunit.